The primary structure comprises 368 residues: Putative F-box/kelch-repeat protein At5g02995 (368 aa).

The F-box domain occupies 35 to 84; that stretch reads SLYWNDPTEDCVWNCLARISRFHYPTLSLVSKGFRSLIASPELEATRSFI. 2 Kelch repeats span residues 140 to 186 and 187 to 233; these read DIYI…IVDK and KIYV…VSGG.

The chain is Putative F-box/kelch-repeat protein At5g02995 from Arabidopsis thaliana (Mouse-ear cress).